A 167-amino-acid polypeptide reads, in one-letter code: Endoribonuclease YbeY (167 aa).

Zn(2+)-binding residues include His-131, His-135, and His-141.

This sequence belongs to the endoribonuclease YbeY family. Zn(2+) serves as cofactor.

The protein resides in the cytoplasm. Single strand-specific metallo-endoribonuclease involved in late-stage 70S ribosome quality control and in maturation of the 3' terminus of the 16S rRNA. This is Endoribonuclease YbeY from Rickettsia rickettsii (strain Iowa).